The chain runs to 165 residues: 2S seed storage protein 5 (165 aa).

The signal sequence occupies residues 1–20 (MAKLILVFATLALFILLANA). 2 consecutive propeptides follow at residues 21–37 (SIYR…DVSN) and 71–89 (YEAD…DDEN).

Belongs to the 2S seed storage albumins family. The mature protein consists of a small and a large chain linked by disulfide bonds.

Functionally, this is a 2S seed storage protein. The protein is 2S seed storage protein 5 (SESA5) of Arabidopsis thaliana (Mouse-ear cress).